A 110-amino-acid chain; its full sequence is HTH-type transcriptional regulator TnrA (110 aa).

One can recognise an HTH merR-type domain in the interval 13–81; sequence VISIGIVSEL…TAEILKDMRK (69 aa). The H-T-H motif DNA-binding region spans 16–35; sequence IGIVSELTGLSVRQIRYYEE.

Homodimer. Under conditions of nitrogen excess, TnrA forms a stable complex with feedback-inhibited GlnA. Interacts with GlnK-AmtB complex.

It is found in the cell membrane. Its activity is regulated as follows. Under conditions of nitrogen excess, the DNA-binding activity is inhibited by the formation of a stable complex with feedback-inhibited GlnA. The presence of glutamine and AMP increases the inhibitory activity of glutamine synthetase by more than 1000-fold. Transcription regulator that actives the transcription of genes required for nitrogen assimilation such as nrgAB (ammonium transport), nasABCDEF (nitrate/nitrite assimilation), ureABC (urea degradation) and gabP (GABA transport), during nitrogen limitation. Also represses glnRA and gltAB in the absence of ammonium. On the contrary of the MerR members, which require longer DNA sites for high-affinity binding, TnrA requires a DNA sequence of 17 nucleotides as minimal binding site. The polypeptide is HTH-type transcriptional regulator TnrA (Bacillus subtilis (strain 168)).